The sequence spans 199 residues: MFISFEGTEGVGKTTLIRKIHQHFEEQGKQVVLTREPGGTPLAEQIRSMLLAVNHDENMSHDTELLLIYAARAQHLQQVILPALESNKIVLSDRFTDASFAYQCSGRGLSQDKLQLLNQNFVSRMPEVTFWLDAPIELGMNRARERGALDRFEQEKLSFFTKVREGYETLWKVEPERIKRLDATQSPDQVFEQALQYLA.

7-14 serves as a coordination point for ATP; that stretch reads GTEGVGKT.

It belongs to the thymidylate kinase family.

It carries out the reaction dTMP + ATP = dTDP + ADP. In terms of biological role, phosphorylation of dTMP to form dTDP in both de novo and salvage pathways of dTTP synthesis. In Acinetobacter baumannii (strain ATCC 17978 / DSM 105126 / CIP 53.77 / LMG 1025 / NCDC KC755 / 5377), this protein is Thymidylate kinase.